Reading from the N-terminus, the 154-residue chain is SsrA-binding protein (154 aa).

It belongs to the SmpB family.

It is found in the cytoplasm. In terms of biological role, required for rescue of stalled ribosomes mediated by trans-translation. Binds to transfer-messenger RNA (tmRNA), required for stable association of tmRNA with ribosomes. tmRNA and SmpB together mimic tRNA shape, replacing the anticodon stem-loop with SmpB. tmRNA is encoded by the ssrA gene; the 2 termini fold to resemble tRNA(Ala) and it encodes a 'tag peptide', a short internal open reading frame. During trans-translation Ala-aminoacylated tmRNA acts like a tRNA, entering the A-site of stalled ribosomes, displacing the stalled mRNA. The ribosome then switches to translate the ORF on the tmRNA; the nascent peptide is terminated with the 'tag peptide' encoded by the tmRNA and targeted for degradation. The ribosome is freed to recommence translation, which seems to be the essential function of trans-translation. The polypeptide is SsrA-binding protein (Gluconacetobacter diazotrophicus (strain ATCC 49037 / DSM 5601 / CCUG 37298 / CIP 103539 / LMG 7603 / PAl5)).